The following is a 103-amino-acid chain: Large ribosomal subunit protein uL24 (103 aa).

The protein belongs to the universal ribosomal protein uL24 family. In terms of assembly, part of the 50S ribosomal subunit.

One of two assembly initiator proteins, it binds directly to the 5'-end of the 23S rRNA, where it nucleates assembly of the 50S subunit. Its function is as follows. One of the proteins that surrounds the polypeptide exit tunnel on the outside of the subunit. The protein is Large ribosomal subunit protein uL24 of Alkaliphilus metalliredigens (strain QYMF).